Here is a 177-residue protein sequence, read N- to C-terminus: Acireductone dioxygenase (177 aa).

A disordered region spans residues 1–23; it reads MVRAWYMDDSDADQRAPHMTDPP. Residues His86, His88, Glu92, and His131 each coordinate Fe(2+). Residues His86, His88, Glu92, and His131 each contribute to the Ni(2+) site.

It belongs to the acireductone dioxygenase (ARD) family. The cofactor is Fe(2+). Requires Ni(2+) as cofactor.

It is found in the cytoplasm. The protein resides in the nucleus. It catalyses the reaction 1,2-dihydroxy-5-(methylsulfanyl)pent-1-en-3-one + O2 = 4-methylsulfanyl-2-oxobutanoate + formate + 2 H(+). The catalysed reaction is 1,2-dihydroxy-5-(methylsulfanyl)pent-1-en-3-one + O2 = 3-(methylsulfanyl)propanoate + CO + formate + 2 H(+). It participates in amino-acid biosynthesis; L-methionine biosynthesis via salvage pathway; L-methionine from S-methyl-5-thio-alpha-D-ribose 1-phosphate: step 5/6. Its function is as follows. Catalyzes 2 different reactions between oxygen and the acireductone 1,2-dihydroxy-3-keto-5-methylthiopentene (DHK-MTPene) depending upon the metal bound in the active site. Fe-containing acireductone dioxygenase (Fe-ARD) produces formate and 2-keto-4-methylthiobutyrate (KMTB), the alpha-ketoacid precursor of methionine in the methionine recycle pathway. Ni-containing acireductone dioxygenase (Ni-ARD) produces methylthiopropionate, carbon monoxide and formate, and does not lie on the methionine recycle pathway. This chain is Acireductone dioxygenase, found in Branchiostoma floridae (Florida lancelet).